Reading from the N-terminus, the 359-residue chain is UDP-3-O-acylglucosamine N-acyltransferase (359 aa).

Histidine 247 serves as the catalytic Proton acceptor.

This sequence belongs to the transferase hexapeptide repeat family. LpxD subfamily. As to quaternary structure, homotrimer.

The enzyme catalyses a UDP-3-O-[(3R)-3-hydroxyacyl]-alpha-D-glucosamine + a (3R)-hydroxyacyl-[ACP] = a UDP-2-N,3-O-bis[(3R)-3-hydroxyacyl]-alpha-D-glucosamine + holo-[ACP] + H(+). Its pathway is bacterial outer membrane biogenesis; LPS lipid A biosynthesis. Its function is as follows. Catalyzes the N-acylation of UDP-3-O-acylglucosamine using 3-hydroxyacyl-ACP as the acyl donor. Is involved in the biosynthesis of lipid A, a phosphorylated glycolipid that anchors the lipopolysaccharide to the outer membrane of the cell. The chain is UDP-3-O-acylglucosamine N-acyltransferase from Chlorobium chlorochromatii (strain CaD3).